Reading from the N-terminus, the 570-residue chain is MFS-type transporter pigP (570 aa).

Residues G14–D54 are disordered. Positions V28 to S41 are enriched in basic and acidic residues. 7 helical membrane passes run V65–I85, L99–L119, W131–T151, V162–V182, G192–F212, C221–I241, and L263–G283. N290 carries an N-linked (GlcNAc...) asparagine glycan. 7 helical membrane passes run V293–W313, V336–F356, V369–V389, F392–L412, W425–I445, L455–L475, and V533–W553.

This sequence belongs to the major facilitator superfamily. TCR/Tet family.

It is found in the cell membrane. Its function is as follows. MFS-type transporter; part of the gene cluster that mediates the biosynthesis of azaphilone pigments (MonAzPs), very widely used as food colorant. The protein is MFS-type transporter pigP of Monascus ruber (Mold).